The sequence spans 438 residues: UDP-N-acetylmuramoylalanine--D-glutamate ligase (438 aa).

112–118 (GSNGKST) contacts ATP.

Belongs to the MurCDEF family.

It is found in the cytoplasm. It carries out the reaction UDP-N-acetyl-alpha-D-muramoyl-L-alanine + D-glutamate + ATP = UDP-N-acetyl-alpha-D-muramoyl-L-alanyl-D-glutamate + ADP + phosphate + H(+). Its pathway is cell wall biogenesis; peptidoglycan biosynthesis. Cell wall formation. Catalyzes the addition of glutamate to the nucleotide precursor UDP-N-acetylmuramoyl-L-alanine (UMA). The protein is UDP-N-acetylmuramoylalanine--D-glutamate ligase of Pectobacterium atrosepticum (strain SCRI 1043 / ATCC BAA-672) (Erwinia carotovora subsp. atroseptica).